The sequence spans 188 residues: NADH-quinone oxidoreductase subunit B 1 (188 aa).

[4Fe-4S] cluster-binding residues include cysteine 39, cysteine 40, cysteine 105, and cysteine 134.

It belongs to the complex I 20 kDa subunit family. As to quaternary structure, NDH-1 is composed of 14 different subunits. Subunits NuoB, C, D, E, F, and G constitute the peripheral sector of the complex. It depends on [4Fe-4S] cluster as a cofactor.

It is found in the cell inner membrane. It catalyses the reaction a quinone + NADH + 5 H(+)(in) = a quinol + NAD(+) + 4 H(+)(out). In terms of biological role, NDH-1 shuttles electrons from NADH, via FMN and iron-sulfur (Fe-S) centers, to quinones in the respiratory chain. The immediate electron acceptor for the enzyme in this species is believed to be ubiquinone. Couples the redox reaction to proton translocation (for every two electrons transferred, four hydrogen ions are translocated across the cytoplasmic membrane), and thus conserves the redox energy in a proton gradient. The sequence is that of NADH-quinone oxidoreductase subunit B 1 from Solibacter usitatus (strain Ellin6076).